The following is a 329-amino-acid chain: Glycerol-3-phosphate dehydrogenase [NAD(P)+] (329 aa).

3 residues coordinate NADPH: tryptophan 15, histidine 35, and lysine 107. Lysine 107, glycine 135, and serine 137 together coordinate sn-glycerol 3-phosphate. Position 139 (alanine 139) interacts with NADPH. 5 residues coordinate sn-glycerol 3-phosphate: lysine 190, aspartate 243, serine 253, arginine 254, and asparagine 255. The Proton acceptor role is filled by lysine 190. Arginine 254 serves as a coordination point for NADPH. Positions 276 and 278 each coordinate NADPH.

This sequence belongs to the NAD-dependent glycerol-3-phosphate dehydrogenase family.

Its subcellular location is the cytoplasm. The enzyme catalyses sn-glycerol 3-phosphate + NAD(+) = dihydroxyacetone phosphate + NADH + H(+). It carries out the reaction sn-glycerol 3-phosphate + NADP(+) = dihydroxyacetone phosphate + NADPH + H(+). The protein operates within membrane lipid metabolism; glycerophospholipid metabolism. In terms of biological role, catalyzes the reduction of the glycolytic intermediate dihydroxyacetone phosphate (DHAP) to sn-glycerol 3-phosphate (G3P), the key precursor for phospholipid synthesis. This is Glycerol-3-phosphate dehydrogenase [NAD(P)+] from Rhodopseudomonas palustris (strain BisB5).